A 542-amino-acid polypeptide reads, in one-letter code: Protein NODULATION SIGNALING PATHWAY 1 (542 aa).

A disordered region spans residues 73-150 (TSTTSLEPCG…SNCNSGNSKE (78 aa)). Over residues 92-103 (LPKKRNATDESS) the composition is skewed to basic and acidic residues. Residues 136 to 148 (AKANGSNCNSGNS) show a composition bias toward low complexity. The 388-residue stretch at 145 to 532 (SGNSKEGRWA…QPVSFCSLWK (388 aa)) folds into the GRAS domain. Positions 152-214 (RWAEQLLNPC…HLSSSSSSPT (63 aa)) are leucine repeat I (LRI). Positions 233-332 (LLKFYEVSPW…GYNYYPRLLG (100 aa)) are VHIID. The short motif at 269–273 (LHILD) is the VHIID element. Residues 333-357 (YAQSININLQINRIENHSLQTLNAQ) are leucine repeat II (LRII). The interval 367-452 (LIVCAQFRLH…RESDERRVME (86 aa)) is PFYRE. The SAW stretch occupies residues 455 to 532 (AAKALTNQRE…QPVSFCSLWK (78 aa)).

This sequence belongs to the GRAS family. As to expression, highly expressed in roots.

The protein localises to the nucleus. Functionally, transcriptional regulator essential for Nod-factor-induced gene expression. Acts downstream of calcium spiking and a calcium/calmodulin-dependent protein kinase required for activation of early nodulation gene expression. Acts as a common symbiosis gene that positively contributes to the early steps of the arbuscular mycorrhizal fungus and rhizobial infection processes in roots. Transcription factor involved in the positive regulation of the beta-carotene isomerase D27, which participates in a pathway leading to biosynthesis of strigolactones in roots. This is Protein NODULATION SIGNALING PATHWAY 1 from Lotus japonicus (Lotus corniculatus var. japonicus).